A 359-amino-acid polypeptide reads, in one-letter code: Transcription factor MYB115 (359 aa).

Residues Met-1–Pro-17 show a composition bias toward polar residues. A disordered region spans residues Met-1–Asp-21. 2 HTH myb-type domains span residues Lys-153 to Ile-208 and Lys-209 to His-259. 2 consecutive DNA-binding regions (H-T-H motif) follow at residues Trp-181–Leu-204 and Trp-232–Lys-255.

As to expression, accumulates in reproductive organs (e.g. flowers and siliques). Expressed at very low levels in vegetative organs.

It is found in the nucleus. Functionally, transcription activator that recognizes the motif 5'-TAACGG-3' in the promoter of target genes. Promotes vegetative-to-embryonic transition and the formation of somatic embryos from root explants in a WUS-independent manner. Together with MYB118, activates the transcription of S-ACP-DES2/AAD2 and S-ACP-DES3/AAD3 thus promoting the biosynthesis of omega-7 monounsaturated fatty acid in seed endosperm. The chain is Transcription factor MYB115 from Arabidopsis thaliana (Mouse-ear cress).